A 216-amino-acid polypeptide reads, in one-letter code: Probable GTP-binding protein EngB (216 aa).

An EngB-type G domain is found at 30–204 (SGLEVAFAGR…QMVLAGWLDL (175 aa)). GTP-binding positions include 38–45 (GRSNAGKS), 64–68 (GRTQL), 82–85 (DLPG), 149–152 (TKAD), and 182–185 (LFSA). Residues S45 and T66 each coordinate Mg(2+).

This sequence belongs to the TRAFAC class TrmE-Era-EngA-EngB-Septin-like GTPase superfamily. EngB GTPase family. The cofactor is Mg(2+).

Its function is as follows. Necessary for normal cell division and for the maintenance of normal septation. In Ectopseudomonas mendocina (strain ymp) (Pseudomonas mendocina), this protein is Probable GTP-binding protein EngB.